We begin with the raw amino-acid sequence, 484 residues long: uncharacterized protein (484 aa).

Residues 1-14 (MIDSTSTATATSKT) are compositionally biased toward low complexity. The segment at 1 to 32 (MIDSTSTATATSKTVELNTNGSKTDASSENGT) is disordered. Over residues 15 to 32 (VELNTNGSKTDASSENGT) the composition is skewed to polar residues. Lysine 305 bears the N6-(pyridoxal phosphate)lysine mark.

This sequence belongs to the class-III pyridoxal-phosphate-dependent aminotransferase family. Pyridoxal 5'-phosphate serves as cofactor.

This is an uncharacterized protein from Schizosaccharomyces pombe (strain 972 / ATCC 24843) (Fission yeast).